A 255-amino-acid polypeptide reads, in one-letter code: 1-(5-phosphoribosyl)-5-[(5-phosphoribosylamino)methylideneamino] imidazole-4-carboxamide isomerase (255 aa).

D8 acts as the Proton acceptor in catalysis. D129 functions as the Proton donor in the catalytic mechanism.

Belongs to the HisA/HisF family.

Its subcellular location is the cytoplasm. It catalyses the reaction 1-(5-phospho-beta-D-ribosyl)-5-[(5-phospho-beta-D-ribosylamino)methylideneamino]imidazole-4-carboxamide = 5-[(5-phospho-1-deoxy-D-ribulos-1-ylimino)methylamino]-1-(5-phospho-beta-D-ribosyl)imidazole-4-carboxamide. Its pathway is amino-acid biosynthesis; L-histidine biosynthesis; L-histidine from 5-phospho-alpha-D-ribose 1-diphosphate: step 4/9. The chain is 1-(5-phosphoribosyl)-5-[(5-phosphoribosylamino)methylideneamino] imidazole-4-carboxamide isomerase from Prochlorococcus marinus (strain MIT 9312).